The sequence spans 191 residues: Threonylcarbamoyl-AMP synthase (191 aa).

In terms of domain architecture, YrdC-like spans 10–191; sequence PFRVRHAAAE…DGRSGAYLRR (182 aa).

It belongs to the SUA5 family. TsaC subfamily.

The protein localises to the cytoplasm. The catalysed reaction is L-threonine + hydrogencarbonate + ATP = L-threonylcarbamoyladenylate + diphosphate + H2O. Its function is as follows. Required for the formation of a threonylcarbamoyl group on adenosine at position 37 (t(6)A37) in tRNAs that read codons beginning with adenine. Catalyzes the conversion of L-threonine, HCO(3)(-)/CO(2) and ATP to give threonylcarbamoyl-AMP (TC-AMP) as the acyladenylate intermediate, with the release of diphosphate. The polypeptide is Threonylcarbamoyl-AMP synthase (Halorhodospira halophila (strain DSM 244 / SL1) (Ectothiorhodospira halophila (strain DSM 244 / SL1))).